Here is a 76-residue protein sequence, read N- to C-terminus: Omega-scoloptoxin(13)-Ssm2b (76 aa).

The N-terminal stretch at methionine 1 to alanine 22 is a signal peptide.

The protein belongs to the scoloptoxin-13 family. Contains 3 disulfide bonds. In terms of tissue distribution, expressed by the venom gland.

The protein localises to the secreted. In terms of biological role, inhibits voltage-gated calcium channel (Cav) currents. This Scolopendra mutilans (Chinese red-headed centipede) protein is Omega-scoloptoxin(13)-Ssm2b.